The primary structure comprises 137 residues: Putative nickel-responsive regulator (137 aa).

Ni(2+) contacts are provided by histidine 78, histidine 89, histidine 91, and cysteine 97.

This sequence belongs to the transcriptional regulatory CopG/NikR family. Ni(2+) serves as cofactor.

In terms of biological role, transcriptional regulator. The polypeptide is Putative nickel-responsive regulator (Syntrophus aciditrophicus (strain SB)).